Here is a 706-residue protein sequence, read N- to C-terminus: Translation factor GUF1 homolog, mitochondrial (706 aa).

Positions 89–272 constitute a tr-type G domain; sequence SRIRNFSIIA…SIVKNVPPPQ (184 aa). Residues 98-105, 165-169, and 219-222 each bind GTP; these read AHIDHGKS, DTPGH, and NKID.

Belongs to the TRAFAC class translation factor GTPase superfamily. Classic translation factor GTPase family. LepA subfamily.

It localises to the mitochondrion inner membrane. The enzyme catalyses GTP + H2O = GDP + phosphate + H(+). Promotes mitochondrial protein synthesis. May act as a fidelity factor of the translation reaction, by catalyzing a one-codon backward translocation of tRNAs on improperly translocated ribosomes. Binds to mitochondrial ribosomes in a GTP-dependent manner. The sequence is that of Translation factor GUF1 homolog, mitochondrial from Thalassiosira pseudonana (Marine diatom).